The sequence spans 522 residues: 2-isopropylmalate synthase (522 aa).

The Pyruvate carboxyltransferase domain occupies Val5–Tyr267. The Mn(2+) site is built by Asp14, His202, His204, and Asn238. The interval Arg392 to Val522 is regulatory domain.

This sequence belongs to the alpha-IPM synthase/homocitrate synthase family. LeuA type 1 subfamily. As to quaternary structure, homodimer. Mn(2+) is required as a cofactor.

It is found in the cytoplasm. The enzyme catalyses 3-methyl-2-oxobutanoate + acetyl-CoA + H2O = (2S)-2-isopropylmalate + CoA + H(+). It functions in the pathway amino-acid biosynthesis; L-leucine biosynthesis; L-leucine from 3-methyl-2-oxobutanoate: step 1/4. In terms of biological role, catalyzes the condensation of the acetyl group of acetyl-CoA with 3-methyl-2-oxobutanoate (2-ketoisovalerate) to form 3-carboxy-3-hydroxy-4-methylpentanoate (2-isopropylmalate). The protein is 2-isopropylmalate synthase of Erwinia tasmaniensis (strain DSM 17950 / CFBP 7177 / CIP 109463 / NCPPB 4357 / Et1/99).